The following is a 235-amino-acid chain: Caffeoyl-CoA O-methyltransferase (235 aa).

Lys8 contacts substrate. Residues Val52, Glu74, 76-77 (GV), Ser82, Asp100, and Ala129 contribute to the S-adenosyl-L-methionine site. Substrate is bound at residue Asp151. Position 151 (Asp151) interacts with a divalent metal cation. Asp153 serves as a coordination point for S-adenosyl-L-methionine. 2 residues coordinate a divalent metal cation: Asp177 and Asn178.

Belongs to the class I-like SAM-binding methyltransferase superfamily. Cation-dependent O-methyltransferase family. CCoAMT subfamily. It depends on a divalent metal cation as a cofactor.

The enzyme catalyses (E)-caffeoyl-CoA + S-adenosyl-L-methionine = (E)-feruloyl-CoA + S-adenosyl-L-homocysteine + H(+). It functions in the pathway aromatic compound metabolism; phenylpropanoid biosynthesis. Functionally, methylates caffeoyl-CoA to feruloyl-CoA and 5-hydroxyferuloyl-CoA to sinapoyl-CoA. Plays a role in the synthesis of feruloylated polysaccharides. Involved in the reinforcement of the plant cell wall. Also involved in the responding to wounding or pathogen challenge by the increased formation of cell wall-bound ferulic acid polymers. This is Caffeoyl-CoA O-methyltransferase from Populus kitakamiensis (Aspen).